The sequence spans 546 residues: Sterol O-acyltransferase 1 (546 aa).

Residue methionine 1 is modified to N-acetylmethionine. Residues 1 to 37 form a disordered region; it reads MVGEEKMSLRNRLSKSGENPEQDEAQRSVSDTQSNGR. The Cytoplasmic segment spans residues 1 to 134; it reads MVGEEKMSLR…LDELFEVDHI (134 aa). Serine 8 is modified (phosphoserine). The span at 27-37 shows a compositional bias: polar residues; sequence RSVSDTQSNGR. Cholesterol is bound at residue histidine 133. A helical membrane pass occupies residues 135–156; sequence RTIYHMFIGLLILFILSTLVVD. The Lumenal segment spans residues 157-176; that stretch reads YIDEGRLVLEFNLLGYAFGK. Residues 177-202 traverse the membrane as a helical segment; it reads LPTVIWTWWAMFLSTLSIPYFLFQRW. The Cytoplasmic portion of the chain corresponds to 203-214; the sequence is AHGYSKTSHPLI. A helical transmembrane segment spans residues 215 to 240; the sequence is YSLSHGFFFLVFQLGILGFVPTYVVL. Topologically, residues 241 to 248 are lumenal; that stretch reads AYTLPPAS. A helical transmembrane segment spans residues 249-272; that stretch reads RFIVILEQIRMVMKAHSFVRENVP. Residues 273–315 are Cytoplasmic-facing; it reads RVLNAAKEKSSTVPVPTVNQYLYFLFAPTLIYRDSYPRTPTVR. A helical membrane pass occupies residues 316–348; that stretch reads WGYVAVQFLQVFGCLFYVYYIFERLCAPLFRNI. Residues 349–365 lie on the Lumenal side of the membrane; the sequence is KQEPFSARVLVLCVFNS. A helical transmembrane segment spans residues 366-391; the sequence is ILPGVLMLFLTFFAFLHCWLNAFAEM. The Cytoplasmic segment spans residues 392 to 439; it reads LRFGDRMFYKDWWNSTSYSNYYRTWNVVVHDWLYYYAYKDLLWFFSKR. Residues 399-405 carry the FYXDWWN motif motif; the sequence is FYKDWWN. Asparagine 411, arginine 414, asparagine 417, histidine 421, tyrosine 429, lysine 441, and serine 452 together coordinate an acyl-CoA. A helical membrane pass occupies residues 440 to 464; sequence FKSAAMLAVFALSAVVHEYALAVCL. Histidine 456 is a catalytic residue. Residues 465 to 470 lie on the Lumenal side of the membrane; the sequence is SYFYPV. A helical membrane pass occupies residues 471 to 486; sequence LFVLFMFFGMAFNFIV. Residues 487–492 lie on the Cytoplasmic side of the membrane; that stretch reads NDSRKR. The helical transmembrane segment at 493–524 threads the bilayer; it reads PIWNIMVWASLFLGHGVILCFYSQEWYARQHC. The cysteines at positions 524 and 542 are disulfide-linked. At 525-546 the chain is on the lumenal side; the sequence is PLKNPTFLDYVRPRSWTCQYVF.

It belongs to the membrane-bound acyltransferase family. Sterol o-acyltransferase subfamily. May form homo- or heterodimers. Interacts with UBIAD1.

The protein localises to the endoplasmic reticulum membrane. It carries out the reaction a sterol + a long-chain fatty acyl-CoA = a long-chain 3-hydroxysterol ester + CoA. The enzyme catalyses cholesterol + an acyl-CoA = a cholesterol ester + CoA. It catalyses the reaction cholesterol + (9Z)-octadecenoyl-CoA = cholesteryl (9Z-octadecenoate) + CoA. The catalysed reaction is cholesterol + hexadecanoyl-CoA = cholesteryl hexadecanoate + CoA. It carries out the reaction octadecanoyl-CoA + cholesterol = cholesteryl octadecanoate + CoA. The enzyme catalyses (9Z,12Z)-octadecadienoyl-CoA + cholesterol = cholesteryl (9Z,12Z)-octadecadienoate + CoA. It catalyses the reaction (5Z,8Z,11Z,14Z)-eicosatetraenoyl-CoA + cholesterol = cholesteryl (5Z,8Z,11Z,14Z)-eicosatetraenoate + CoA. The catalysed reaction is (9Z)-hexadecenoyl-CoA + cholesterol = cholesteryl (9Z)-hexadecenoate + CoA. It carries out the reaction (11Z)-octadecenoyl-CoA + cholesterol = cholesteryl (11Z)-octadecenoate + CoA. The enzyme catalyses (7Z)-octadecenoyl-CoA + cholesterol = cholesteryl (7Z)-octadecenoate + CoA. In terms of biological role, catalyzes the formation of fatty acid-cholesterol esters, which are less soluble in membranes than cholesterol. Plays a role in lipoprotein assembly and dietary cholesterol absorption. Preferentially utilizes oleoyl-CoA ((9Z)-octadecenoyl-CoA) as a substrate: shows a higher activity towards an acyl-CoA substrate with a double bond at the delta-9 position (9Z) than towards saturated acyl-CoA or an unsaturated acyl-CoA with a double bond at the delta-7 (7Z) or delta-11 (11Z) positions. This is Sterol O-acyltransferase 1 (SOAT1) from Cricetulus griseus (Chinese hamster).